The following is a 118-amino-acid chain: uncharacterized protein (118 aa).

This sequence to M.jannaschii MJ0310 and MJ1340.

This is an uncharacterized protein from Methanocaldococcus jannaschii (strain ATCC 43067 / DSM 2661 / JAL-1 / JCM 10045 / NBRC 100440) (Methanococcus jannaschii).